Here is a 318-residue protein sequence, read N- to C-terminus: 2-methyl-6-phytyl-1,4-hydroquinone methyltransferase (318 aa).

Residues 1–39 form the signal peptide; the sequence is MPEYLLLPAGLISLSLAIAAGLYLLTARGYQSSDSVANA. An SAM motif I region spans residues 97–106; sequence VLDVGCGIGG. The segment at 157–165 is SAM motif II; it reads GSFDVVWSV. The segment at 184–193 is SAM motif III; that stretch reads VVKPGGILVV.

The protein belongs to the class I-like SAM-binding methyltransferase superfamily. gTMT family.

It carries out the reaction 2-methyl-6-phytyl-1,4-benzene-1,4-diol + S-adenosyl-L-methionine = 2,3-dimethyl-6-phytylbenzene-1,4-diol + S-adenosyl-L-homocysteine + H(+). The catalysed reaction is 2-methyl-6-(all-trans-nonaprenyl)benzene-1,4-diol + S-adenosyl-L-methionine = plastoquinol-9 + S-adenosyl-L-homocysteine + H(+). It catalyses the reaction 6-geranylgeranyl-2-methylbenzene-1,4-diol + S-adenosyl-L-methionine = 6-geranylgeranyl-2,3-dimethylbenzene-1,4-diol + S-adenosyl-L-homocysteine + H(+). Its pathway is cofactor biosynthesis; tocopherol biosynthesis. Involved in a key methylation step in both tocopherol (vitamin E) and plastoquinone synthesis. Catalyzes the conversion of 2-methyl-6-phytyl-1,4-hydroquinol (MPBQ) to 2,3-dimethyl-6-phytyl-1,4-hydroquinol (DMPQ, a substrate for tocopherol cyclase), and 2-methyl-6-solanyl-1,4-benzoquinol (MSBQ) to plastoquinol. The chain is 2-methyl-6-phytyl-1,4-hydroquinone methyltransferase from Synechocystis sp. (strain ATCC 27184 / PCC 6803 / Kazusa).